We begin with the raw amino-acid sequence, 524 residues long: Translation initiation factor eIF2B subunit delta (524 aa).

The interval 1-173 (MATAAVAVRE…ERQQVPTRKD (173 aa)) is disordered. An N-acetylalanine modification is found at Ala-2. Position 12 is a phosphoserine (Ser-12). Basic and acidic residues predominate over residues 26 to 40 (AEGREMTQEEKLQLR). Positions 41–51 (KEKKQQKKKRK) are enriched in basic residues. Thr-86 carries the phosphothreonine modification. Composition is skewed to basic and acidic residues over residues 87–121 (AKEK…RKGD) and 161–173 (KKPE…TRKD). The segment at 171 to 180 (RKDYGSKVSL) is may bind the chemical integrated stress response (ISR) inhibitor ISRIB.

It belongs to the eIF-2B alpha/beta/delta subunits family. Component of the translation initiation factor 2B (eIF2B) complex which is a heterodecamer of two sets of five different subunits: alpha, beta, gamma, delta and epsilon. Subunits alpha, beta and delta comprise a regulatory subcomplex and subunits epsilon and gamma comprise a catalytic subcomplex. Within the complex, the hexameric regulatory complex resides at the center, with the two heterodimeric catalytic subcomplexes bound on opposite sides.

It localises to the cytoplasm. The protein resides in the cytosol. With respect to regulation, activated by the chemical integrated stress response (ISR) inhibitor ISRIB which stimulates guanine nucleotide exchange factor activity for both phosphorylated and unphosphorylated eIF2. In terms of biological role, acts as a component of the translation initiation factor 2B (eIF2B) complex, which catalyzes the exchange of GDP for GTP on eukaryotic initiation factor 2 (eIF2) gamma subunit. Its guanine nucleotide exchange factor activity is repressed when bound to eIF2 complex phosphorylated on the alpha subunit, thereby limiting the amount of methionyl-initiator methionine tRNA available to the ribosome and consequently global translation is repressed. The chain is Translation initiation factor eIF2B subunit delta (EIF2B4) from Bos taurus (Bovine).